The primary structure comprises 346 residues: MTEQRTIASSATREDEAADASIRPKRLADYLGQQPVRDQMEIYIQAAKARGEAMDHVLIFGPPGLGKTTLSHVIANELGVSLRVTSGPVIEKAGDLAALLTNLQPHDVLFIDEIHRLSPVVEEVLYPAMEDFQIDIMIGDGPAARSIKIDLPPFTLIGATTRAGLLTAPLRDRFGIVQRLEFYSPQELTRIVIRSAAILGIDCTPDGAAEIARRARGTPRIANRLLRRVRDFAQVKAAGHIDLAVAQAAMQMLKVDPEGFDELDRRMLRTIVDHFDGGPVGVESLAASLSEERGTLEDVIEPYLIQQGFLIRTARGRMVTPKAYLHLGLKPPRDRAPAIGEPGDLF.

Positions 1 to 11 (MTEQRTIASSA) are enriched in polar residues. Positions 1-20 (MTEQRTIASSATREDEAADA) are disordered. Residues 1–183 (MTEQRTIASS…FGIVQRLEFY (183 aa)) are large ATPase domain (RuvB-L). ATP contacts are provided by residues I22, R23, G64, K67, T68, T69, 130–132 (EDF), R173, Y183, and R220. Residue T68 participates in Mg(2+) binding. The tract at residues 184 to 254 (SPQELTRIVI…VAQAAMQMLK (71 aa)) is small ATPAse domain (RuvB-S). Residues 257 to 346 (PEGFDELDRR…PAIGEPGDLF (90 aa)) are head domain (RuvB-H). 3 residues coordinate DNA: R293, R312, and R317.

This sequence belongs to the RuvB family. Homohexamer. Forms an RuvA(8)-RuvB(12)-Holliday junction (HJ) complex. HJ DNA is sandwiched between 2 RuvA tetramers; dsDNA enters through RuvA and exits via RuvB. An RuvB hexamer assembles on each DNA strand where it exits the tetramer. Each RuvB hexamer is contacted by two RuvA subunits (via domain III) on 2 adjacent RuvB subunits; this complex drives branch migration. In the full resolvosome a probable DNA-RuvA(4)-RuvB(12)-RuvC(2) complex forms which resolves the HJ.

The protein localises to the cytoplasm. The catalysed reaction is ATP + H2O = ADP + phosphate + H(+). In terms of biological role, the RuvA-RuvB-RuvC complex processes Holliday junction (HJ) DNA during genetic recombination and DNA repair, while the RuvA-RuvB complex plays an important role in the rescue of blocked DNA replication forks via replication fork reversal (RFR). RuvA specifically binds to HJ cruciform DNA, conferring on it an open structure. The RuvB hexamer acts as an ATP-dependent pump, pulling dsDNA into and through the RuvAB complex. RuvB forms 2 homohexamers on either side of HJ DNA bound by 1 or 2 RuvA tetramers; 4 subunits per hexamer contact DNA at a time. Coordinated motions by a converter formed by DNA-disengaged RuvB subunits stimulates ATP hydrolysis and nucleotide exchange. Immobilization of the converter enables RuvB to convert the ATP-contained energy into a lever motion, pulling 2 nucleotides of DNA out of the RuvA tetramer per ATP hydrolyzed, thus driving DNA branch migration. The RuvB motors rotate together with the DNA substrate, which together with the progressing nucleotide cycle form the mechanistic basis for DNA recombination by continuous HJ branch migration. Branch migration allows RuvC to scan DNA until it finds its consensus sequence, where it cleaves and resolves cruciform DNA. This Xanthomonas campestris pv. campestris (strain B100) protein is Holliday junction branch migration complex subunit RuvB.